A 137-amino-acid polypeptide reads, in one-letter code: MPKHHQKAQSPGGSQRQLRVGEIVRHAVAELLSQGGVHDPVLEGHLITVPEVRMSPDLKLATVYVMPLGGRDTDVVLKALAANKPFIRTAVARRVNLKFAPDLRFRIDERFDEAERIEKLLRTPGVQKDLQQDSDET.

Belongs to the RbfA family. Monomer. Binds 30S ribosomal subunits, but not 50S ribosomal subunits or 70S ribosomes.

The protein resides in the cytoplasm. In terms of biological role, one of several proteins that assist in the late maturation steps of the functional core of the 30S ribosomal subunit. Associates with free 30S ribosomal subunits (but not with 30S subunits that are part of 70S ribosomes or polysomes). Required for efficient processing of 16S rRNA. May interact with the 5'-terminal helix region of 16S rRNA. The sequence is that of Ribosome-binding factor A from Rhodopseudomonas palustris (strain BisB18).